The primary structure comprises 156 residues: Small ribosomal subunit protein uS7 (156 aa).

This sequence belongs to the universal ribosomal protein uS7 family. As to quaternary structure, part of the 30S ribosomal subunit. Contacts proteins S9 and S11.

One of the primary rRNA binding proteins, it binds directly to 16S rRNA where it nucleates assembly of the head domain of the 30S subunit. Is located at the subunit interface close to the decoding center, probably blocks exit of the E-site tRNA. This is Small ribosomal subunit protein uS7 from Vibrio vulnificus (strain CMCP6).